The chain runs to 397 residues: Mycinamicin IV hydroxylase/epoxidase (397 aa).

A disordered region spans residues 63–86 (RGPSMTRDEPRTRPEMVKGGLLSM). The span at 68 to 78 (TRDEPRTRPEM) shows a compositional bias: basic and acidic residues. G81 lines the substrate pocket. The heme site is built by H91, R95, R288, H344, and C346.

The protein belongs to the cytochrome P450 family. It depends on heme as a cofactor.

Its pathway is antibiotic biosynthesis; mycinamicin biosynthesis. Involved in the biosynthesis of mycinamicin, a 16-membered macrolide antibiotic. Catalyzes consecutive hydroxylation (at C14) and epoxidation (at C12-C13) reactions with mycinamicin IV as initial substrate, leading to mycinamicin II. These reactions require prior dimethylation of 6-deoxyallose to mycinose for effective conversion by the dual function MycG enzyme. In Micromonospora griseorubida, this protein is Mycinamicin IV hydroxylase/epoxidase.